The primary structure comprises 592 residues: K(+) efflux antiporter 4 (592 aa).

The first 35 residues, 1 to 35 (MRRCKNNTDKFSVITMRLLTLLLICTFFFFFSFAY), serve as a signal peptide directing secretion. 12 helical membrane passes run 169-189 (LISDLVVVIVSATCGGIAFAC), 193-213 (PVITGYLLAGSIIGPGGLSFV), 221-241 (TVAQFGVIFLLFALGLEFSAA), 248-268 (AVAIPGGLLQIFLFMCLSGIT), 279-299 (GIFVGAFLSMSSTAVVLKFLM), 313-333 (VGTLILQDCAVGLLFALLPVL), 343-363 (VLSMAKSLAILIAFLGALFVL), 388-408 (LAAVAFCLLVAWCSDKLGLSL), 437-457 (NFFAALFLASIGMLIHMHFLW), 462-482 (ILLAAVLLVIVIKTVVVAIVV), 491-511 (TAVLVGMSLAQIGEFAFVLLS), and 535-555 (LVTTPLLFKLIPAVVHLGVLL).

It belongs to the monovalent cation:proton antiporter 2 (CPA2) transporter (TC 2.A.37) family. KEA (TC 2.A.37.1) subfamily. Expressed in roots, stems, leaves, flowers and silique.

It is found in the golgi apparatus membrane. Its subcellular location is the golgi apparatus. It localises to the trans-Golgi network membrane. The protein localises to the prevacuolar compartment membrane. The protein resides in the endomembrane system. It catalyses the reaction K(+)(in) + H(+)(out) = K(+)(out) + H(+)(in). Its function is as follows. Electroneutral K(+)/H(+) efflux antiporter involved in K(+) homeostasis and osmotic adjustment. Together with KEA5 and KEA6, promotes growth and development, and facilitates endosomal pH and ions homeostasis, as well as salt tolerance (e.g. K(+), NaCl and LiCl), probably by supporting cell wall biosynthesis during rapid etiolated seedling growth. The sequence is that of K(+) efflux antiporter 4 from Arabidopsis thaliana (Mouse-ear cress).